Reading from the N-terminus, the 100-residue chain is Probable DNA-binding protein HU (100 aa).

This sequence belongs to the bacterial histone-like protein family.

In terms of biological role, histone-like DNA-binding protein which is capable of wrapping DNA to stabilize it, and thus to prevent its denaturation under extreme environmental conditions. This Chlamydia muridarum (strain MoPn / Nigg) protein is Probable DNA-binding protein HU (hup).